The chain runs to 339 residues: Ferrochelatase (339 aa).

Fe cation contacts are provided by His202 and Glu283.

This sequence belongs to the ferrochelatase family.

The protein localises to the cytoplasm. It catalyses the reaction heme b + 2 H(+) = protoporphyrin IX + Fe(2+). It participates in porphyrin-containing compound metabolism; protoheme biosynthesis; protoheme from protoporphyrin-IX: step 1/1. Catalyzes the ferrous insertion into protoporphyrin IX. This is Ferrochelatase from Psychrobacter arcticus (strain DSM 17307 / VKM B-2377 / 273-4).